Reading from the N-terminus, the 702-residue chain is Ribosomal RNA large subunit methyltransferase K/L (702 aa).

A THUMP domain is found at 43–154; it reads LIYQSLMWSR…KETAHISLDL (112 aa).

Belongs to the methyltransferase superfamily. RlmKL family.

The protein resides in the cytoplasm. The catalysed reaction is guanosine(2445) in 23S rRNA + S-adenosyl-L-methionine = N(2)-methylguanosine(2445) in 23S rRNA + S-adenosyl-L-homocysteine + H(+). The enzyme catalyses guanosine(2069) in 23S rRNA + S-adenosyl-L-methionine = N(2)-methylguanosine(2069) in 23S rRNA + S-adenosyl-L-homocysteine + H(+). Functionally, specifically methylates the guanine in position 2445 (m2G2445) and the guanine in position 2069 (m7G2069) of 23S rRNA. This is Ribosomal RNA large subunit methyltransferase K/L from Enterobacter sp. (strain 638).